We begin with the raw amino-acid sequence, 31 residues long: Phospholipase A2 homolog P-elapitoxin-Aa1a beta chain (31 aa).

This sequence belongs to the phospholipase A2 family. Group I subfamily. In terms of assembly, heterotrimer of alpha, beta and gamma chains, each related to PLA2. In terms of tissue distribution, expressed by the venom gland.

Its subcellular location is the secreted. In terms of biological role, heterotrimer: Snake venom phospholipase A2 (PLA2) that has presynaptic neurotoxicity. Inhibits nerve-evoked twitch contractions but not responses to cholinergic agonists acetylcholine and carbachol and to depolarizing agonist KCl. Causes a fade in tetanic contractions. Displays a triphasic mode of action with depression, enhancement and blockade of neurotransmission. Does not display myotoxic activity such as changes in baseline muscle tension or inhibition of directly stimulated muscle twitches. All subunits are necessary for maximum toxicity. Monomer: The beta chain has no enzymatic activity and is not toxic by itself. The chain is Phospholipase A2 homolog P-elapitoxin-Aa1a beta chain from Acanthophis antarcticus (Common death adder).